We begin with the raw amino-acid sequence, 294 residues long: 4-diphosphocytidyl-2-C-methyl-D-erythritol kinase (294 aa).

Residue Lys11 is part of the active site. 96-106 (PVAAGIGGGSA) is a binding site for ATP. Asp138 is an active-site residue.

It belongs to the GHMP kinase family. IspE subfamily.

The catalysed reaction is 4-CDP-2-C-methyl-D-erythritol + ATP = 4-CDP-2-C-methyl-D-erythritol 2-phosphate + ADP + H(+). It functions in the pathway isoprenoid biosynthesis; isopentenyl diphosphate biosynthesis via DXP pathway; isopentenyl diphosphate from 1-deoxy-D-xylulose 5-phosphate: step 3/6. Catalyzes the phosphorylation of the position 2 hydroxy group of 4-diphosphocytidyl-2C-methyl-D-erythritol. The chain is 4-diphosphocytidyl-2-C-methyl-D-erythritol kinase from Rhodopseudomonas palustris (strain BisB5).